Here is a 610-residue protein sequence, read N- to C-terminus: UvrABC system protein C (610 aa).

A GIY-YIG domain is found at 16 to 94 (SQPGVYRMYD…IKLYQPRYNV (79 aa)). The 36-residue stretch at 204-239 (DQVLTQLISRMETASQNLEFEEAARIRDQIQAVRRV) folds into the UVR domain.

This sequence belongs to the UvrC family. As to quaternary structure, interacts with UvrB in an incision complex.

The protein localises to the cytoplasm. Functionally, the UvrABC repair system catalyzes the recognition and processing of DNA lesions. UvrC both incises the 5' and 3' sides of the lesion. The N-terminal half is responsible for the 3' incision and the C-terminal half is responsible for the 5' incision. This chain is UvrABC system protein C, found in Escherichia coli (strain ATCC 8739 / DSM 1576 / NBRC 3972 / NCIMB 8545 / WDCM 00012 / Crooks).